The primary structure comprises 185 residues: HTH-type transcriptional regulator Hpr (185 aa).

One can recognise an HTH marR-type domain in the interval 13-157 (AMIFSQRIAQ…LIAILRNIYG (145 aa)). The segment at residues 63-86 (ISEIAKFGVMHVSTAFNFSKKLEE) is a DNA-binding region (H-T-H motif).

In terms of assembly, homodimer.

Its function is as follows. Negative regulator of protease production and sporulation. The sequence is that of HTH-type transcriptional regulator Hpr from Bacillus anthracis (strain CDC 684 / NRRL 3495).